Here is a 353-residue protein sequence, read N- to C-terminus: tRNA N6-adenosine threonylcarbamoyltransferase (353 aa).

Fe cation-binding residues include H111 and H115. Substrate is bound by residues L134–G138, D167, G180, D184, and N279. D307 contacts Fe cation.

Belongs to the KAE1 / TsaD family. Fe(2+) serves as cofactor.

The protein resides in the cytoplasm. The catalysed reaction is L-threonylcarbamoyladenylate + adenosine(37) in tRNA = N(6)-L-threonylcarbamoyladenosine(37) in tRNA + AMP + H(+). In terms of biological role, required for the formation of a threonylcarbamoyl group on adenosine at position 37 (t(6)A37) in tRNAs that read codons beginning with adenine. Is involved in the transfer of the threonylcarbamoyl moiety of threonylcarbamoyl-AMP (TC-AMP) to the N6 group of A37, together with TsaE and TsaB. TsaD likely plays a direct catalytic role in this reaction. This is tRNA N6-adenosine threonylcarbamoyltransferase from Thermosynechococcus vestitus (strain NIES-2133 / IAM M-273 / BP-1).